A 304-amino-acid chain; its full sequence is Protein phosphatase PTC7 homolog (304 aa).

A mitochondrion-targeting transit peptide spans 1–68 (MFSVLSYGRL…GDDACFVARH (68 aa)). Residues 69–299 (RSADVLGVAD…DDITVLLSIV (231 aa)) form the PPM-type phosphatase domain. 3 residues coordinate Mn(2+): D78, G79, and D223.

Belongs to the PP2C family. Interacts with FBXL4, BNIP3 and NIX; these interactions are important for ubiquitination and degradation of BNIP3 and NIX. The cofactor is Mg(2+). Mn(2+) serves as cofactor. Expressed in keratinocytes (at protein level).

It is found in the mitochondrion matrix. The catalysed reaction is O-phospho-L-seryl-[protein] + H2O = L-seryl-[protein] + phosphate. It carries out the reaction O-phospho-L-threonyl-[protein] + H2O = L-threonyl-[protein] + phosphate. Its activity is regulated as follows. Inhibited by sodium orthovanadate. Protein phosphatase that plays an essential role in mitochondrial metabolism and biogenesis. Positively regulates biosynthesis of the ubiquinone, coenzyme Q. Dephosphorylates the ubiquinone biosynthesis protein COQ7 which is likely to lead to its activation. Serves as a crucial sensor for mitophagy, though the underlying mechanism remains ambiguous. May dephosphorylate BNIP3 and NIX and thereby directly regulates mitophagy receptor function and stability. Alternatively, promotes SCF-FBXL4-dependent ubiquitination and degradation of BNIP3 and NIX independently of its catalytic activity to restrain mitophagy. The protein is Protein phosphatase PTC7 homolog (PPTC7) of Homo sapiens (Human).